A 151-amino-acid polypeptide reads, in one-letter code: 3-hydroxyacyl-[acyl-carrier-protein] dehydratase FabZ (151 aa).

His-52 is an active-site residue.

The protein belongs to the thioester dehydratase family. FabZ subfamily.

The protein localises to the cytoplasm. It catalyses the reaction a (3R)-hydroxyacyl-[ACP] = a (2E)-enoyl-[ACP] + H2O. Its function is as follows. Involved in unsaturated fatty acids biosynthesis. Catalyzes the dehydration of short chain beta-hydroxyacyl-ACPs and long chain saturated and unsaturated beta-hydroxyacyl-ACPs. This Lactococcus lactis subsp. lactis (strain IL1403) (Streptococcus lactis) protein is 3-hydroxyacyl-[acyl-carrier-protein] dehydratase FabZ (fabZ1).